The sequence spans 668 residues: Threonine--tRNA ligase (668 aa).

Positions 1–64 (MSQSVSLTFP…TDGKIEIITR (64 aa)) constitute a TGS domain. The tract at residues 245 to 553 (DHRKLGREMD…LIENFAGHMP (309 aa)) is catalytic. Zn(2+) contacts are provided by cysteine 347, histidine 398, and histidine 530.

This sequence belongs to the class-II aminoacyl-tRNA synthetase family. Homodimer. Zn(2+) is required as a cofactor.

The protein resides in the cytoplasm. The enzyme catalyses tRNA(Thr) + L-threonine + ATP = L-threonyl-tRNA(Thr) + AMP + diphosphate + H(+). In terms of biological role, catalyzes the attachment of threonine to tRNA(Thr) in a two-step reaction: L-threonine is first activated by ATP to form Thr-AMP and then transferred to the acceptor end of tRNA(Thr). Also edits incorrectly charged L-seryl-tRNA(Thr). This Rhizobium etli (strain ATCC 51251 / DSM 11541 / JCM 21823 / NBRC 15573 / CFN 42) protein is Threonine--tRNA ligase.